The primary structure comprises 388 residues: Phosphoglycerate kinase (388 aa).

Substrate-binding positions include 21–23 (DLN), Arg-36, 59–62 (HLGR), Arg-114, and Arg-147. ATP contacts are provided by residues Lys-198, Glu-315, and 341 to 344 (GGDT).

Belongs to the phosphoglycerate kinase family. In terms of assembly, monomer.

It is found in the cytoplasm. The enzyme catalyses (2R)-3-phosphoglycerate + ATP = (2R)-3-phospho-glyceroyl phosphate + ADP. It participates in carbohydrate degradation; glycolysis; pyruvate from D-glyceraldehyde 3-phosphate: step 2/5. The polypeptide is Phosphoglycerate kinase (Buchnera aphidicola subsp. Schizaphis graminum (strain Sg)).